A 302-amino-acid chain; its full sequence is 4-diphosphocytidyl-2-C-methyl-D-erythritol kinase (302 aa).

The active site involves K13. 101-111 (PVASGIGGGSS) provides a ligand contact to ATP. The active site involves D143.

Belongs to the GHMP kinase family. IspE subfamily.

The catalysed reaction is 4-CDP-2-C-methyl-D-erythritol + ATP = 4-CDP-2-C-methyl-D-erythritol 2-phosphate + ADP + H(+). It functions in the pathway isoprenoid biosynthesis; isopentenyl diphosphate biosynthesis via DXP pathway; isopentenyl diphosphate from 1-deoxy-D-xylulose 5-phosphate: step 3/6. Its function is as follows. Catalyzes the phosphorylation of the position 2 hydroxy group of 4-diphosphocytidyl-2C-methyl-D-erythritol. This chain is 4-diphosphocytidyl-2-C-methyl-D-erythritol kinase, found in Granulibacter bethesdensis (strain ATCC BAA-1260 / CGDNIH1).